Here is a 453-residue protein sequence, read N- to C-terminus: UDP-N-acetylmuramate--L-alanyl-gamma-D-glutamyl-meso-2,6-diaminoheptandioate ligase (453 aa).

111 to 117 (GTHGKTT) lines the ATP pocket.

This sequence belongs to the MurCDEF family. Mpl subfamily. Requires Mg(2+) as cofactor.

It carries out the reaction UDP-N-acetyl-alpha-D-muramate + L-alanyl-gamma-D-glutamyl-meso-2,6-diaminopimelate + ATP = UDP-N-acetyl-alpha-D-muramoyl-L-alanyl-gamma-D-glutamyl-meso-2,6-diaminopimelate + ADP + phosphate + H(+). Its pathway is cell wall biogenesis; peptidoglycan recycling. Reutilizes the intact tripeptide L-alanyl-gamma-D-glutamyl-meso-diaminopimelate by linking it to UDP-N-acetylmuramate. In Haemophilus influenzae (strain ATCC 51907 / DSM 11121 / KW20 / Rd), this protein is UDP-N-acetylmuramate--L-alanyl-gamma-D-glutamyl-meso-2,6-diaminoheptandioate ligase.